Consider the following 536-residue polypeptide: Probable 1,4-beta-D-glucan cellobiohydrolase B (536 aa).

An N-terminal signal peptide occupies residues 1-21; sequence MSSFQVYRAALLLSILATANA. Residues 22 to 458 are catalytic; it reads QQVGTYTTET…SNIKFGPIGS (437 aa). The Nucleophile role is filled by Glu-233. Glu-238 functions as the Proton donor in the catalytic mechanism. Asn-351 and Asn-414 each carry an N-linked (GlcNAc...) asparagine glycan. Residues 459–500 are ser/Thr-rich linker; it reads TYSSGSSSGSGSSSSSSSTTTKATSTTLKTTSTTSSGSSSTS. Residues 464–499 are disordered; that stretch reads SSSGSGSSSSSSSTTTKATSTTLKTTSTTSSGSSST. A CBM1 domain is found at 500-536; that stretch reads SAAQAYGQCGGQGWTGPTTCVSGYTCTYENAYYSQCL. 2 cysteine pairs are disulfide-bonded: Cys-508–Cys-525 and Cys-519–Cys-535.

This sequence belongs to the glycosyl hydrolase 7 (cellulase C) family.

The protein localises to the secreted. It carries out the reaction Hydrolysis of (1-&gt;4)-beta-D-glucosidic linkages in cellulose and cellotetraose, releasing cellobiose from the non-reducing ends of the chains.. Its function is as follows. The biological conversion of cellulose to glucose generally requires three types of hydrolytic enzymes: (1) Endoglucanases which cut internal beta-1,4-glucosidic bonds; (2) Exocellobiohydrolases that cut the disaccharide cellobiose from the non-reducing end of the cellulose polymer chain; (3) Beta-1,4-glucosidases which hydrolyze the cellobiose and other short cello-oligosaccharides to glucose. The chain is Probable 1,4-beta-D-glucan cellobiohydrolase B (cbhB) from Aspergillus niger (strain ATCC MYA-4892 / CBS 513.88 / FGSC A1513).